A 94-amino-acid polypeptide reads, in one-letter code: Protein EGG APPARATUS-1 (94 aa).

At 1–15 (MSSCPAIVNMKDDDG) the chain is on the cytoplasmic side. The chain crosses the membrane as a helical; Signal-anchor for type II membrane protein span at residues 16-36 (IGAMGAAVAFAAMGVFGIYFL). Residues 37-94 (WPVVGPTSAGMMMKAPGAAGWVICRAVFEANPQLYFTILRTAGAAAAAATFAACSIAS) lie on the Extracellular side of the membrane.

Possible proteolysis of the C-terminal region from the predicted transmembrane domain to permit secretion and transport of the mature protein to the cell walls of the nucellus, allowing the spreading from the egg cell apparatus to the micropylar opening of the ovule. In terms of tissue distribution, expressed only in the egg apparatus, consisting of the egg cell and two synergids. Not detected in the central cell, antipodals, and nucellar and integumental cells.

It is found in the membrane. Functionally, involved in short-range signaling required for pollen tube attraction by the female gametophyte. Required for female fertility. This is Protein EGG APPARATUS-1 (Ea1) from Zea mays (Maize).